Consider the following 333-residue polypeptide: Glycerol-3-phosphate dehydrogenase [NAD(P)+] (333 aa).

NADPH contacts are provided by Trp16, Arg36, and Lys109. Sn-glycerol 3-phosphate is bound by residues Lys109, Gly137, and Ser139. Position 141 (Ala141) interacts with NADPH. Residues Lys192, Asp245, Ser255, Arg256, and Asn257 each contribute to the sn-glycerol 3-phosphate site. Lys192 acts as the Proton acceptor in catalysis. Arg256 is a binding site for NADPH. The NADPH site is built by Val280 and Glu282.

This sequence belongs to the NAD-dependent glycerol-3-phosphate dehydrogenase family.

It localises to the cytoplasm. The catalysed reaction is sn-glycerol 3-phosphate + NAD(+) = dihydroxyacetone phosphate + NADH + H(+). The enzyme catalyses sn-glycerol 3-phosphate + NADP(+) = dihydroxyacetone phosphate + NADPH + H(+). It participates in membrane lipid metabolism; glycerophospholipid metabolism. Functionally, catalyzes the reduction of the glycolytic intermediate dihydroxyacetone phosphate (DHAP) to sn-glycerol 3-phosphate (G3P), the key precursor for phospholipid synthesis. In Parvibaculum lavamentivorans (strain DS-1 / DSM 13023 / NCIMB 13966), this protein is Glycerol-3-phosphate dehydrogenase [NAD(P)+].